The sequence spans 145 residues: Hemoglobin subunit beta-1 (145 aa).

The region spanning 1-145 is the Globin domain; that stretch reads TFTNDESQHI…VEAALATGYH (145 aa). Heme b is bound by residues histidine 62 and histidine 91.

This sequence belongs to the globin family. In terms of assembly, major hemoglobin is a tetramer of two alpha-1 chains and two beta-1 chains. In terms of tissue distribution, red blood cells.

Functionally, involved in oxygen transport from the lung to the various peripheral tissues. The polypeptide is Hemoglobin subunit beta-1 (HBB1) (Triturus cristatus (Great crested newt)).